Here is a 728-residue protein sequence, read N- to C-terminus: 1,4-alpha-glucan branching enzyme GlgB (728 aa).

The active-site Nucleophile is the aspartate 405. Residue glutamate 458 is the Proton donor of the active site.

This sequence belongs to the glycosyl hydrolase 13 family. GlgB subfamily. As to quaternary structure, monomer.

It catalyses the reaction Transfers a segment of a (1-&gt;4)-alpha-D-glucan chain to a primary hydroxy group in a similar glucan chain.. It functions in the pathway glycan biosynthesis; glycogen biosynthesis. Catalyzes the formation of the alpha-1,6-glucosidic linkages in glycogen by scission of a 1,4-alpha-linked oligosaccharide from growing alpha-1,4-glucan chains and the subsequent attachment of the oligosaccharide to the alpha-1,6 position. The protein is 1,4-alpha-glucan branching enzyme GlgB of Escherichia coli O157:H7.